Consider the following 85-residue polypeptide: Conotoxin Cap15a (85 aa).

A signal peptide spans 1–23 (MEKLTFLILVATVLLTIHVLVQS). The propeptide occupies 24-49 (VGDKHLKRRPKQYATKHLSALMRGHR). Pyrrolidone carboxylic acid is present on Gln50.

The protein belongs to the conotoxin O2 superfamily. Post-translationally, contains 4 disulfide bonds. In terms of tissue distribution, expressed by the venom duct.

The protein resides in the secreted. The sequence is that of Conotoxin Cap15a from Conus capitaneus (Captain cone).